Consider the following 254-residue polypeptide: MSTNLHWQSFGQGPDLVLLHGWGMNGAVWQQTVESLQPYFRVHVVDLPGYGHSAESHAEDLAKIADLVLQDAPEKAVWLGWSLGGLVATHIALNAPQRVSKLITVASSPKFAAERPWRGIQPNVLTAFTDQLLEDFSVTIERFMALQAMGSPSARKDVKQLKQAVLSRPQPNPDSLLVGLNILADVDLRDALTSLSMPMLRLYGRLDGLVPIKVASDLNEQLPSTQQFVFNQSSHAPFMTEHEAFCLQVREFAA.

The region spanning 16-241 (LVLLHGWGMN…QSSHAPFMTE (226 aa)) is the AB hydrolase-1 domain. Substrate is bound by residues Trp22, 82 to 83 (SL), and 143 to 147 (FMALQ). Ser82 acts as the Nucleophile in catalysis. Catalysis depends on residues Asp207 and His235. His235 is a substrate binding site.

The protein belongs to the AB hydrolase superfamily. Carboxylesterase BioH family. In terms of assembly, monomer.

The protein resides in the cytoplasm. It catalyses the reaction 6-carboxyhexanoyl-[ACP] methyl ester + H2O = 6-carboxyhexanoyl-[ACP] + methanol + H(+). The protein operates within cofactor biosynthesis; biotin biosynthesis. Functionally, the physiological role of BioH is to remove the methyl group introduced by BioC when the pimeloyl moiety is complete. It allows to synthesize pimeloyl-ACP via the fatty acid synthetic pathway through the hydrolysis of the ester bonds of pimeloyl-ACP esters. In Vibrio campbellii (strain ATCC BAA-1116), this protein is Pimeloyl-[acyl-carrier protein] methyl ester esterase.